The following is a 359-amino-acid chain: GDSL esterase/lipase At2g30310 (359 aa).

The first 28 residues, 1–28, serve as a signal peptide directing secretion; the sequence is MSTSKTIVFGLFVATLLVSCNVAANATT. Catalysis depends on Ser-41, which acts as the Nucleophile. N-linked (GlcNAc...) asparagine glycosylation is found at Asn-103 and Asn-325. Residues Asp-333 and His-336 contribute to the active site.

It belongs to the 'GDSL' lipolytic enzyme family.

The protein resides in the secreted. In Arabidopsis thaliana (Mouse-ear cress), this protein is GDSL esterase/lipase At2g30310.